Reading from the N-terminus, the 113-residue chain is ATP-dependent Clp protease adapter protein ClpS (113 aa).

A disordered region spans residues 1-24 (MTAQLHMMSDKHDQDNDASVLLQT).

The protein belongs to the ClpS family. Binds to the N-terminal domain of the chaperone ClpA.

Its function is as follows. Involved in the modulation of the specificity of the ClpAP-mediated ATP-dependent protein degradation. This chain is ATP-dependent Clp protease adapter protein ClpS, found in Ruegeria pomeroyi (strain ATCC 700808 / DSM 15171 / DSS-3) (Silicibacter pomeroyi).